A 278-amino-acid polypeptide reads, in one-letter code: Bis(5'-nucleosyl)-tetraphosphatase, symmetrical (278 aa).

It belongs to the Ap4A hydrolase family.

The catalysed reaction is P(1),P(4)-bis(5'-adenosyl) tetraphosphate + H2O = 2 ADP + 2 H(+). Hydrolyzes diadenosine 5',5'''-P1,P4-tetraphosphate to yield ADP. This is Bis(5'-nucleosyl)-tetraphosphatase, symmetrical from Nitrosococcus oceani (strain ATCC 19707 / BCRC 17464 / JCM 30415 / NCIMB 11848 / C-107).